Consider the following 255-residue polypeptide: Chlorocatechol 1,2-dioxygenase (255 aa).

Tyr-130, Tyr-164, His-188, and His-190 together coordinate Fe cation.

This sequence belongs to the intradiol ring-cleavage dioxygenase family. Fe(3+) serves as cofactor.

The catalysed reaction is 3,5-dichlorocatechol + O2 = (2E,4E)-2,4-dichloromuconate + 2 H(+). Its pathway is aromatic compound metabolism; 3-chlorocatechol degradation. Functionally, preferentially converts 3,5-dichlorocatechol as opposed to other chlorinated catechols. Retains diminished activity toward non-chlorinated substrates. The sequence is that of Chlorocatechol 1,2-dioxygenase (tfdC) from Burkholderia cepacia (Pseudomonas cepacia).